The primary structure comprises 157 residues: Small ribosomal subunit protein uS7 (157 aa).

This sequence belongs to the universal ribosomal protein uS7 family. Part of the 30S ribosomal subunit. Contacts proteins S9 and S11.

In terms of biological role, one of the primary rRNA binding proteins, it binds directly to 16S rRNA where it nucleates assembly of the head domain of the 30S subunit. Is located at the subunit interface close to the decoding center, probably blocks exit of the E-site tRNA. This Phenylobacterium zucineum (strain HLK1) protein is Small ribosomal subunit protein uS7.